A 518-amino-acid chain; its full sequence is Glutamate--cysteine ligase (518 aa).

It belongs to the glutamate--cysteine ligase type 1 family. Type 1 subfamily.

It catalyses the reaction L-cysteine + L-glutamate + ATP = gamma-L-glutamyl-L-cysteine + ADP + phosphate + H(+). Its pathway is sulfur metabolism; glutathione biosynthesis; glutathione from L-cysteine and L-glutamate: step 1/2. The chain is Glutamate--cysteine ligase from Escherichia coli O139:H28 (strain E24377A / ETEC).